A 585-amino-acid polypeptide reads, in one-letter code: Regulatory protein BlaR1 (585 aa).

Topologically, residues 1–4 (MAKL) are extracellular. A helical membrane pass occupies residues 5–22 (LIMSIVSFCFIFLLLLFF). Topologically, residues 23–31 (RYILKRYFN) are cytoplasmic. The helical transmembrane segment at 32–48 (YMLNYKVWYLTLLAGLI) threads the bilayer. The Extracellular segment spans residues 49–104 (PFIPIKFSLFKFNNVNNQAPTVESKSHDLNHNINTTKPIQEFATDIHKFNWDSIDN). A helical membrane pass occupies residues 105–122 (ISTVIWIVLVIILSFKFL). The Cytoplasmic portion of the chain corresponds to 123 to 311 (KALLYLKYLK…NLKKQSKLIL (189 aa)). Residues 312 to 328 (IFICIFTFLLMVIQSQF) form a helical membrane-spanning segment. Over 329–585 (LMGQSITDYN…LKEMGVLNGQ (257 aa)) the chain is Extracellular. A beta-lactam antibiotic sensor domain region spans residues 331–585 (GQSITDYNYK…LKEMGVLNGQ (255 aa)). Catalysis depends on serine 389, which acts as the Acyl-ester intermediate. Position 392 is an N6-carboxylysine (lysine 392).

Belongs to the peptidase M56 family. Carboxylation occurs on two lysine residues. Carboxylation at 'Lys-392' activates the active site serine residue for acylation. On acylation, the lysine side chain experiences a spontaneous decarboxylation that entraps the sensor in its activated state.

It is found in the cell membrane. Its function is as follows. Integral membrane protein involved in sensing of the presence of beta-lactam antibiotics and transduction of the information to the cytoplasm. Mechanistically, activation of the signal transducer involves acylation of a serine in the C-terminal sensor domain upon binding of the beta-lactam antibiotic. In turn, a conformational change occurs and the signal is transmitted from the cell surface to the cytoplasm. There, the zinc protease domain is activated and initiates autoproteolysis as well as cleavage of the transcriptional repressor BlaI leading to derepression of antibiotic resistance genes. The sequence is that of Regulatory protein BlaR1 (blaR1) from Staphylococcus aureus.